Here is a 233-residue protein sequence, read N- to C-terminus: Small ribosomal subunit protein uS3 (233 aa).

A KH type-2 domain is found at 39–107; sequence VRQFLTKELS…PAQINTYEIR (69 aa).

This sequence belongs to the universal ribosomal protein uS3 family. In terms of assembly, part of the 30S ribosomal subunit. Forms a tight complex with proteins S10 and S14.

In terms of biological role, binds the lower part of the 30S subunit head. Binds mRNA in the 70S ribosome, positioning it for translation. This Hamiltonella defensa subsp. Acyrthosiphon pisum (strain 5AT) protein is Small ribosomal subunit protein uS3.